Consider the following 231-residue polypeptide: DNA mismatch repair protein MutH (231 aa).

Belongs to the MutH family.

Its subcellular location is the cytoplasm. In terms of biological role, sequence-specific endonuclease that cleaves unmethylated GATC sequences. It is involved in DNA mismatch repair. In Salmonella enteritidis PT4 (strain P125109), this protein is DNA mismatch repair protein MutH.